We begin with the raw amino-acid sequence, 192 residues long: UPF0301 protein Rru_A3059 (192 aa).

Belongs to the UPF0301 (AlgH) family.

This is UPF0301 protein Rru_A3059 from Rhodospirillum rubrum (strain ATCC 11170 / ATH 1.1.1 / DSM 467 / LMG 4362 / NCIMB 8255 / S1).